The following is an 836-amino-acid chain: Zinc fingers and homeoboxes protein 2 (836 aa).

Residues methionine 1–valine 61 are disordered. Residues threonine 8 to leucine 19 show a composition bias toward polar residues. The interaction with EFNB1 stretch occupies residues alanine 27 to glycine 77. A compositionally biased stretch (basic and acidic residues) spans glutamate 50 to valine 61. A Glycyl lysine isopeptide (Lys-Gly) (interchain with G-Cter in SUMO2) cross-link involves residue lysine 64. C2H2-type zinc fingers lie at residues tyrosine 78 to histidine 101 and tyrosine 110 to histidine 133. A disordered region spans residues proline 164–glycine 214. Residues leucine 192 to glycine 214 show a composition bias toward basic and acidic residues. The interval aspartate 195–serine 358 is required for homodimerization. 4 consecutive DNA-binding regions (homeobox) follow at residues asparagine 263–glutamate 324, threonine 439–isoleucine 501, proline 530–valine 591, and serine 628–tryptophan 690. Positions asparagine 263–lysine 446 are required for repressor activity. The tract at residues asparagine 263 to glycine 497 is required for interaction with NFYA. The segment at histidine 317–lysine 446 is required for nuclear localization. The segment at glycine 404–serine 442 is disordered. Lysine 455 is covalently cross-linked (Glycyl lysine isopeptide (Lys-Gly) (interchain with G-Cter in SUMO2)). Basic and acidic residues-rich tracts occupy residues methionine 699–serine 709, tyrosine 730–valine 746, and arginine 813–serine 824. The tract at residues methionine 699–alanine 836 is disordered. A phosphoserine mark is found at serine 824 and serine 826.

It belongs to the ZHX family. As to quaternary structure, homodimer (via homeobox domain 1). Heterodimer with ZHX1 (via homeobox domain 1). Heterodimer with ZHX3 (via homeobox domain 1). Heterodimerization with ZHX1 is not necessary for repressor activity. Interacts (via homeobox domain) with NFYA (via N-terminus). Interacts with EFNB1 intracellular domain peptide; the interaction enhances ZHX2 transcriptional repression activity. As to expression, expressed in retina where it localizes to Muller glial cells of the inner nuclear layer (at protein level). Detected in heart, brain, spleen, lung, liver, skeletal muscle, kidney and testis.

The protein localises to the nucleus. Its function is as follows. Acts as a transcriptional repressor. Represses the promoter activity of the CDC25C gene stimulated by NFYA. May play a role in retinal development where it regulates the composition of bipolar cell populations, by promoting differentiation of bipolar OFF-type cells. In the brain, may promote maintenance and suppress differentiation of neural progenitor cells in the developing cortex. The sequence is that of Zinc fingers and homeoboxes protein 2 (Zhx2) from Mus musculus (Mouse).